Reading from the N-terminus, the 121-residue chain is Small ribosomal subunit protein uS13 (121 aa).

A disordered region spans residues 99–121 (RGQRTRTNSRTRKGPRRKIMKKK). Residues 101-121 (QRTRTNSRTRKGPRRKIMKKK) are compositionally biased toward basic residues.

The protein belongs to the universal ribosomal protein uS13 family. As to quaternary structure, part of the 30S ribosomal subunit. Forms a loose heterodimer with protein S19. Forms two bridges to the 50S subunit in the 70S ribosome.

Located at the top of the head of the 30S subunit, it contacts several helices of the 16S rRNA. In the 70S ribosome it contacts the 23S rRNA (bridge B1a) and protein L5 of the 50S subunit (bridge B1b), connecting the 2 subunits; these bridges are implicated in subunit movement. Contacts the tRNAs in the A and P-sites. The sequence is that of Small ribosomal subunit protein uS13 from Thermodesulfovibrio yellowstonii (strain ATCC 51303 / DSM 11347 / YP87).